The following is a 294-amino-acid chain: Tryptophan 2,3-dioxygenase 1 (294 aa).

The segment at 1–20 (MSEPIQPTRPAASGCPMHGA) is disordered. Substrate contacts are provided by residues 63–67 (FIVQH), Y125, and R129. H252 contacts heme. T266 is a binding site for substrate.

The protein belongs to the tryptophan 2,3-dioxygenase family. In terms of assembly, homotetramer. It depends on heme as a cofactor.

It catalyses the reaction L-tryptophan + O2 = N-formyl-L-kynurenine. It functions in the pathway amino-acid degradation; L-tryptophan degradation via kynurenine pathway; L-kynurenine from L-tryptophan: step 1/2. Its function is as follows. Heme-dependent dioxygenase that catalyzes the oxidative cleavage of the L-tryptophan (L-Trp) pyrrole ring and converts L-tryptophan to N-formyl-L-kynurenine. Catalyzes the oxidative cleavage of the indole moiety. The protein is Tryptophan 2,3-dioxygenase 1 of Ralstonia nicotianae (strain ATCC BAA-1114 / GMI1000) (Ralstonia solanacearum).